The sequence spans 329 residues: Intradiol ring-cleavage dioxygenase hqdA (329 aa).

Y167, Y201, H225, and H227 together coordinate Fe cation.

The protein belongs to the intradiol ring-cleavage dioxygenase family. Homodimer. Requires Fe(3+) as cofactor.

The enzyme catalyses catechol + O2 = cis,cis-muconate + 2 H(+). The catalysed reaction is benzene-1,2,4-triol + O2 = maleylacetate + 2 H(+). Functionally, intradiol ring-cleavage dioxygenase involved in an alternative pathway to the protocatechuic acid pathway since it is active on hydroxyquinol and catechol but not on protocatechuic acid. This Aspergillus niger (strain ATCC MYA-4892 / CBS 513.88 / FGSC A1513) protein is Intradiol ring-cleavage dioxygenase hqdA.